The sequence spans 822 residues: Anaphase-promoting complex subunit 2 (822 aa).

S218, S314, S470, S534, and S697 each carry phosphoserine. Positions 450–495 (GDLAVELSKTDPASLETGQDSEDDSGEPEDWVPDPVDADPGKSSSK) are disordered. Residues 468–481 (QDSEDDSGEPEDWV) are compositionally biased toward acidic residues. Positions 502–700 (ISLLVSIYGS…LLRRRMSVWL (199 aa)) are cullin homology. Y810 carries the post-translational modification Phosphotyrosine.

It belongs to the cullin family. The mammalian APC/C is composed at least of 14 distinct subunits ANAPC1, ANAPC2, CDC27/APC3, ANAPC4, ANAPC5, CDC16/APC6, ANAPC7, CDC23/APC8, ANAPC10, ANAPC11, CDC26/APC12, ANAPC13, ANAPC15 and ANAPC16 that assemble into a complex of at least 19 chains with a combined molecular mass of around 1.2 MDa; APC/C interacts with FZR1 and FBXO5. In the context of the APC/C complex, directly interacts with UBE2C and UBE2S. Interacts (via cullin domain) with ANAPC11 and with UBCH10. Interacts with NEUROD2. Interacts with FBXO43; the interaction is direct.

The protein operates within protein modification; protein ubiquitination. Its function is as follows. Together with the RING-H2 protein ANAPC11, constitutes the catalytic component of the anaphase promoting complex/cyclosome (APC/C), a cell cycle-regulated E3 ubiquitin ligase that controls progression through mitosis and the G1 phase of the cell cycle. The APC/C complex acts by mediating ubiquitination and subsequent degradation of target proteins: it mainly mediates the formation of 'Lys-11'-linked polyubiquitin chains and, to a lower extent, the formation of 'Lys-48'- and 'Lys-63'-linked polyubiquitin chains. The APC/C complex catalyzes assembly of branched 'Lys-11'-/'Lys-48'-linked branched ubiquitin chains on target proteins. The CDC20-APC/C complex positively regulates the formation of synaptic vesicle clustering at active zone to the presynaptic membrane in postmitotic neurons. CDC20-APC/C-induced degradation of NEUROD2 drives presynaptic differentiation. The polypeptide is Anaphase-promoting complex subunit 2 (ANAPC2) (Homo sapiens (Human)).